A 453-amino-acid chain; its full sequence is Omega-3 fatty acid desaturase, chloroplastic (453 aa).

The short motif at 171–175 is the Histidine box-1 element; the sequence is HDCGH. A Histidine box-2 motif is present at residues 207–211; sequence HRTHH. Positions 374–378 match the Histidine box-3 motif; the sequence is HVIHH.

The protein belongs to the fatty acid desaturase type 1 family.

Its subcellular location is the plastid. The protein resides in the chloroplast membrane. Its pathway is lipid metabolism; polyunsaturated fatty acid biosynthesis. Its function is as follows. Chloroplast omega-3 fatty acid desaturase introduces the third double bond in the biosynthesis of 16:3 and 18:3 fatty acids, important constituents of plant membranes. It is thought to use ferredoxin as an electron donor and to act on fatty acids esterified to galactolipids, sulfolipids and phosphatidylglycerol. This is Omega-3 fatty acid desaturase, chloroplastic (FAD7) from Glycine max (Soybean).